We begin with the raw amino-acid sequence, 208 residues long: Uracil phosphoribosyltransferase (208 aa).

5-phospho-alpha-D-ribose 1-diphosphate is bound by residues arginine 78, arginine 103, and 130 to 138 (DPMLATGGS). Residues isoleucine 193 and 198-200 (GDA) contribute to the uracil site. Residue aspartate 199 coordinates 5-phospho-alpha-D-ribose 1-diphosphate.

This sequence belongs to the UPRTase family. The cofactor is Mg(2+).

It catalyses the reaction UMP + diphosphate = 5-phospho-alpha-D-ribose 1-diphosphate + uracil. It functions in the pathway pyrimidine metabolism; UMP biosynthesis via salvage pathway; UMP from uracil: step 1/1. With respect to regulation, allosterically activated by GTP. In terms of biological role, catalyzes the conversion of uracil and 5-phospho-alpha-D-ribose 1-diphosphate (PRPP) to UMP and diphosphate. The protein is Uracil phosphoribosyltransferase of Shewanella oneidensis (strain ATCC 700550 / JCM 31522 / CIP 106686 / LMG 19005 / NCIMB 14063 / MR-1).